A 203-amino-acid chain; its full sequence is Hypoxanthine-guanine phosphoribosyltransferase (203 aa).

Diphosphate contacts are provided by Lys66 and Gly67. Positions 122 and 123 each coordinate Mg(2+). Catalysis depends on Asp126, which acts as the Proton acceptor. Residues Lys154, 175 to 176, and Asp182 each bind GMP; that span reads FV. Arg188 contacts diphosphate.

This sequence belongs to the purine/pyrimidine phosphoribosyltransferase family. Mg(2+) serves as cofactor.

The protein resides in the cytoplasm. The catalysed reaction is IMP + diphosphate = hypoxanthine + 5-phospho-alpha-D-ribose 1-diphosphate. It catalyses the reaction GMP + diphosphate = guanine + 5-phospho-alpha-D-ribose 1-diphosphate. Its pathway is purine metabolism; IMP biosynthesis via salvage pathway; IMP from hypoxanthine: step 1/1. The protein operates within purine metabolism; GMP biosynthesis via salvage pathway; GMP from guanine: step 1/1. Its function is as follows. Purine salvage pathway enzyme that catalyzes the transfer of the ribosyl-5-phosphate group from 5-phospho-alpha-D-ribose 1-diphosphate (PRPP) to the N9 position of the 6-oxopurines hypoxanthine and guanine to form the corresponding ribonucleotides IMP (inosine 5'-monophosphate) and GMP (guanosine 5'-monophosphate), with the release of PPi. This Mycobacterium avium protein is Hypoxanthine-guanine phosphoribosyltransferase (hpt).